A 607-amino-acid polypeptide reads, in one-letter code: Thymidine kinase (607 aa).

2 disordered regions span residues 1-160 (MAGF…ADST) and 180-215 (DDKSDCESEDESNFRRPSSHSALKQKNGGKGKPSGL). Over residues 17–32 (KCQEDESPENERHENF) the composition is skewed to basic and acidic residues. 3 stretches are compositionally biased toward polar residues: residues 88-106 (AAVTSNTGNSPGSRHTSCP), 148-160 (RKTSCTEGGADST), and 194-203 (RRPSSHSALK). An ATP-binding site is contributed by 291 to 298 (GAPGVGKT). Glu317 (proton acceptor) is an active-site residue. Gln355 provides a ligand contact to substrate. Arg445 lines the ATP pocket. Arg451 contributes to the substrate binding site.

This sequence belongs to the herpesviridae thymidine kinase family. Homodimer.

Its subcellular location is the virion tegument. The protein localises to the host nucleus. The catalysed reaction is thymidine + ATP = dTMP + ADP + H(+). Its function is as follows. Catalyzes the transfer of the gamma-phospho group of ATP to thymidine to generate dTMP in the salvage pathway of pyrimidine synthesis. The dTMP serves as a substrate for DNA polymerase during viral DNA replication. Allows the virus to be reactivated and to grow in non-proliferative cells lacking a high concentration of phosphorylated nucleic acid precursors. The chain is Thymidine kinase from Epstein-Barr virus (strain GD1) (HHV-4).